The primary structure comprises 99 residues: U1-theraphotoxin-Lsp1c (99 aa).

An N-terminal signal peptide occupies residues 1–23; that stretch reads MRKITIRALLLCSLLLVFHTSAA. A propeptide spanning residues 24–50 is cleaved from the precursor; it reads AELQAQEGHLMIPGDTDTALETVDDER. 4 cysteine pairs are disulfide-bonded: cysteine 54-cysteine 67, cysteine 58-cysteine 91, cysteine 72-cysteine 74, and cysteine 85-cysteine 96.

Belongs to the neurotoxin 12 (Hwtx-2) family. 04 (lasiotoxin) subfamily. Expressed by the venom gland.

The protein localises to the secreted. Toxin that causes irreversible contractile paralysis into adult Aedes aegypti resulting in 100% mortality after 24 hours. This chain is U1-theraphotoxin-Lsp1c, found in Lasiodora sp. (strain IBSP 8539) (Brazilian salmon pink birdeater).